We begin with the raw amino-acid sequence, 535 residues long: BAR/IMD domain-containing adapter protein 2 (535 aa).

The IMD domain maps to 1–250 (MSLSRSEEMH…VQLMQQMANS (250 aa)). A coiled-coil region spans residues 88 to 153 (NQLEETLKSF…LRKKSQGSKN (66 aa)). S262, S324, S326, and S337 each carry phosphoserine. Positions 299-370 (VMNGVAGPDS…TLPRSSSMAA (72 aa)) are disordered. Residues 321–335 (QPKSLSPPQSQSKLS) show a composition bias toward low complexity. T341 is modified (phosphothreonine). A Phosphoserine modification is found at S347. The segment covering 349-368 (TPKNSYATTENKTLPRSSSM) has biased composition (polar residues). T361 is modified (phosphothreonine). Phosphoserine occurs at positions 367, 385, 396, and 455. The region spanning 375–438 (NGRMRVKAIF…PFSYTRVLDS (64 aa)) is the SH3 domain. The disordered stretch occupies residues 445 to 477 (HMSLQQGKSSSTGNLLDKDDLALPPPDYGTSSR). Residues 447-458 (SLQQGKSSSTGN) show a composition bias toward polar residues.

Homodimer. Interacts with CDC42 and RAC1 that have been activated by GTP binding. Binds DIAPH1. Interacts with ATN1, ADGRB1, SHANK1, SHANK2, SHANK3, TIAM1, WASF1 and WASF2. Interacts with ENAH after recruitment of CDC42. Interacts with EPS8. Post-translationally, phosphorylated on tyrosine residues by INSR in response to insulin treatment. Detected in liver, brain, olfactory bulb, brain cortex, caudate putamen, hypothalamus and cerebellum.

The protein resides in the cytoplasm. The protein localises to the membrane. It localises to the cell projection. Its subcellular location is the filopodium. It is found in the ruffle. The protein resides in the cytoskeleton. Adapter protein that links membrane-bound small G-proteins to cytoplasmic effector proteins. Necessary for CDC42-mediated reorganization of the actin cytoskeleton and for RAC1-mediated membrane ruffling. Involved in the regulation of the actin cytoskeleton by WASF family members and the Arp2/3 complex. Plays a role in neurite growth. Acts syngeristically with ENAH to promote filipodia formation. Plays a role in the reorganization of the actin cytoskeleton in response to bacterial infection. Participates in actin bundling when associated with EPS8, promoting filopodial protrusions. The sequence is that of BAR/IMD domain-containing adapter protein 2 (Baiap2) from Mus musculus (Mouse).